The chain runs to 98 residues: MSMVYVNISLAFTLSLMGLLMYRSHLMSSLLCLEGMMLSLFVMMSITIMSNHFTLASMAPIILLVFAACEAALGLSLLVMISNTYGTDYVQNLNLLQC.

The next 3 membrane-spanning stretches (helical) occupy residues 1–21, 29–49, and 61–81; these read MSMV…GLLM, SLLC…ITIM, and IILL…LVMI.

This sequence belongs to the complex I subunit 4L family. In terms of assembly, core subunit of respiratory chain NADH dehydrogenase (Complex I) which is composed of 45 different subunits.

It is found in the mitochondrion inner membrane. The enzyme catalyses a ubiquinone + NADH + 5 H(+)(in) = a ubiquinol + NAD(+) + 4 H(+)(out). In terms of biological role, core subunit of the mitochondrial membrane respiratory chain NADH dehydrogenase (Complex I) which catalyzes electron transfer from NADH through the respiratory chain, using ubiquinone as an electron acceptor. Part of the enzyme membrane arm which is embedded in the lipid bilayer and involved in proton translocation. This chain is NADH-ubiquinone oxidoreductase chain 4L (MT-ND4L), found in Procyon lotor (Raccoon).